Reading from the N-terminus, the 175-residue chain is Ferritin light chain (175 aa).

Residue serine 2 is modified to N-acetylserine. The Ferritin-like diiron domain occupies 7 to 156 (QNYSTEVEAA…DHLTNIQRLV (150 aa)). Positions 54, 57, 58, 61, and 64 each coordinate Fe cation. Positions 54-61 (ELAEEKRE) are catalytic site for iron oxidation.

The protein belongs to the ferritin family. Oligomer of 24 subunits. There are two types of subunits: L (light) chain and H (heavy) chain. The major chain can be light or heavy, depending on the species and tissue type. The functional molecule forms a roughly spherical shell with a diameter of 12 nm and contains a central cavity into which the insoluble mineral iron core is deposited. Interacts with NCOA4.

Its subcellular location is the cytoplasmic vesicle. The protein localises to the autophagosome. It is found in the cytoplasm. The protein resides in the autolysosome. In terms of biological role, stores iron in a soluble, non-toxic, readily available form. Important for iron homeostasis. Iron is taken up in the ferrous form and deposited as ferric hydroxides after oxidation. Also plays a role in delivery of iron to cells. Mediates iron uptake in capsule cells of the developing kidney. Delivery to lysosomes by the cargo receptor NCOA4 for autophagic degradation and release or iron. The chain is Ferritin light chain (FTL) from Equus caballus (Horse).